The following is a 353-amino-acid chain: Zinc transporter 5 (353 aa).

The N-terminal stretch at 1-27 (MATAAMTKVFVLLFLVAACYLPAHAAA) is a signal peptide. Residues 28–48 (AECDCATDTAGRDKAQALRLK) are Extracellular-facing. A helical transmembrane segment spans residues 49 to 69 (VIAIFCILAGSTVGAALPSLG). Over 70–86 (GRFPAIQPETDVFLSVK) the chain is Cytoplasmic. A helical membrane pass occupies residues 87–107 (AFAGGVILATGLVHILPAAFE). At 108–121 (ALSSPCLVGGPWKR) the chain is on the extracellular side. Residues 122 to 142 (FPFAGMVAMVSAIGTLIVDTV) traverse the membrane as a helical segment. Over 143 to 198 (ATGYFHRTDAKRKAAAVADEPADDLEASDEHSHGHAHGMSVMSVAPAGEEDLVRHR) the chain is Cytoplasmic. A helical transmembrane segment spans residues 199–219 (VISQVLELGVVVHSLIIGMSL). Residues 220–230 (GASDFPSTVRP) lie on the Extracellular side of the membrane. The chain crosses the membrane as a helical span at residues 231 to 251 (LVPALTFHQFFEGIGLGGCIV). Over 252 to 260 (QAKFRVRSV) the chain is Cytoplasmic. Residues 261–281 (VTMALFFSLTTPAGIVVGIGI) traverse the membrane as a helical segment. Topologically, residues 282 to 292 (SSVYDANSPTA) are extracellular. The helical transmembrane segment at 293–313 (LVVQGLLEAAAAGILVYMALV) threads the bilayer. Residues 314-332 (DILAEDFMKTKVQRRGRLQ) are Cytoplasmic-facing. A helical membrane pass occupies residues 333–353 (LAMNVALLLGAGLMSMIAIWA).

The protein belongs to the ZIP transporter (TC 2.A.5) family.

The protein resides in the cell membrane. Zinc transporter that mediates zinc uptake from the rhizosphere and may be responsible for the translocation of zinc within the plant. The sequence is that of Zinc transporter 5 (ZIP5) from Oryza sativa subsp. japonica (Rice).